A 254-amino-acid polypeptide reads, in one-letter code: Pectate lyase E (254 aa).

A signal peptide spans 1–17 (MYQPLLLLPLLLTSAFA). Residues 227–254 (TNNNSKEPKKKSSGPSSYCKYSEPLSKC) are disordered. N-linked (GlcNAc...) asparagine glycosylation is present at asparagine 229. Over residues 239 to 254 (SGPSSYCKYSEPLSKC) the composition is skewed to low complexity.

Belongs to the polysaccharide lyase 3 family. Ca(2+) serves as cofactor.

The protein resides in the secreted. It catalyses the reaction Eliminative cleavage of (1-&gt;4)-alpha-D-galacturonan to give oligosaccharides with 4-deoxy-alpha-D-galact-4-enuronosyl groups at their non-reducing ends.. Functionally, pectinolytic enzyme consist of four classes of enzymes: pectin lyase, polygalacturonase, pectin methylesterase and rhamnogalacturonase. Among pectinolytic enzymes, pectin lyase is the most important in depolymerization of pectin, since it cleaves internal glycosidic bonds of highly methylated pectins. Favors pectate, the anion, over pectin, the methyl ester. The protein is Pectate lyase E (plyE) of Emericella nidulans (strain FGSC A4 / ATCC 38163 / CBS 112.46 / NRRL 194 / M139) (Aspergillus nidulans).